The following is a 248-amino-acid chain: tRNA (guanine-N(1)-)-methyltransferase (248 aa).

Residues Gly-113 and Ile-133 to Leu-138 each bind S-adenosyl-L-methionine.

Belongs to the RNA methyltransferase TrmD family. In terms of assembly, homodimer.

Its subcellular location is the cytoplasm. It catalyses the reaction guanosine(37) in tRNA + S-adenosyl-L-methionine = N(1)-methylguanosine(37) in tRNA + S-adenosyl-L-homocysteine + H(+). Specifically methylates guanosine-37 in various tRNAs. This is tRNA (guanine-N(1)-)-methyltransferase from Shewanella piezotolerans (strain WP3 / JCM 13877).